The primary structure comprises 1622 residues: Transient receptor potential cation channel subfamily M member 1 (1622 aa).

Disordered stretches follow at residues 1–25, 64–95, 450–490, 618–641, and 822–856; these read MGSM…GSQK, PPLP…KHTQ, LAPP…EVEE, LGME…EEEI, and SKEN…HKKQ. Residues 1–875 are Cytoplasmic-facing; it reads MGSMRKMSSS…CEFYNAPIVK (875 aa). Positions 8–25 are enriched in low complexity; sequence SSSFKRGSIKSSTSGSQK. Residues 70–95 are compositionally biased toward polar residues; it reads APSTTGEDTKQADTQSGKWSVSKHTQ. The segment covering 472–483 has biased composition (basic residues); that stretch reads GRGKGKGKKKGK. Composition is skewed to basic and acidic residues over residues 823–832 and 843–853; these read KENEDGKEKE and GSRKGDEENEH. The helical transmembrane segment at 876-896 threads the bilayer; that stretch reads FWFYTISYLGYLLLFNYVILV. Residues 897 to 942 are Extracellular-facing; it reads RMDGWPSPQEWIVISYIVSLALEKIREILMSEPGKLSQKIKVWLQE. The helical transmembrane segment at 943-963 threads the bilayer; the sequence is YWNITDLVAISMFMVGAILRL. At 964-973 the chain is on the cytoplasmic side; the sequence is QSQPYMGYGR. A helical transmembrane segment spans residues 974 to 994; sequence VIYCVDIILWYIRVLDIFGVN. Topologically, residues 995-1006 are extracellular; that stretch reads KYLGPYVMMIGK. The helical transmembrane segment at 1007–1027 threads the bilayer; sequence MMIDMLYFVVIMLVVLMSFGV. The Cytoplasmic segment spans residues 1028-1099; the sequence is ARQAILHPEE…CIPGAWLTPA (72 aa). Residues 1100–1120 form a helical membrane-spanning segment; that stretch reads LMACYLLVANILLVNLLIAVF. N-linked (GlcNAc...) asparagine glycosylation occurs at Asn1121. The Extracellular portion of the chain corresponds to 1121–1150; the sequence is NNTFFEVKSISNQVWKFQRYQLIMTFHDRP. Residues 1151-1171 traverse the membrane as a helical segment; that stretch reads VLPPPMIILSHIYIIIMRLSG. Residues 1172–1622 are Cytoplasmic-facing; sequence RCRKKREGDQ…QEKRSAETEC (451 aa). A coiled-coil region spans residues 1224–1252; it reads DERIRVTSERVENMSMRLEEINERENFMK. Disordered regions lie at residues 1354–1383, 1389–1408, and 1567–1622; these read EDAK…RSRL, LSTE…EFDP, and CLRS…ETEC. Basic and acidic residues predominate over residues 1613 to 1622; it reads QEKRSAETEC.

It belongs to the transient receptor (TC 1.A.4) family. LTrpC subfamily. TRPM1 sub-subfamily. Homodimer. Interacts with TRPM3; the interaction results in the formation of a heteromultimeric cation channel complex that are functionally different from the homomeric channels. Interacts with GPR179. Associates with both guanine nucleotide-binding proteins G(o) and beta-gamma G protein dimer; implicated in directly regulating TRPM1 channel open-state. As to expression, expressed in the retina where it localizes on dendritic tips of ON bipolar cells. Specifically, it is expressed in retinal bipolar cells (BPCs) of the ON subtype. Not detected in brain, lung, liver, heart, kidney, spleen or small intestine. Also expressed at high levels in poorly metastatic variants of B16 melanoma and at much reduced levels in highly metastatic variants of B16 melanoma.

The protein localises to the cell membrane. The protein resides in the endoplasmic reticulum membrane. It is found in the cell projection. It localises to the axon. The catalysed reaction is Ca(2+)(in) = Ca(2+)(out). The enzyme catalyses Mg(2+)(in) = Mg(2+)(out). It catalyses the reaction Mn(2+)(in) = Mn(2+)(out). It carries out the reaction Ni(2+)(in) = Ni(2+)(out). Its activity is regulated as follows. Inhibited by extracellular zinc ions. Inhibited by intracellular Mg(2+). Activated by the neuroactive steroid pregnenolone sulfate. Negatively regulated by activation of GRM6 receptors in the ON-bipolar cells. In terms of biological role, constitutively open nonselective divalent cation-conducting channels which mediate the influx of Ca(2+), Mg(2+), Mn(2+), Ba(2+), and Ni(2+) into the cytoplasm, leading to membrane depolarization. Impermeable to zinc ions. In addition, forms heteromultimeric ion channels with TRPM3 which are permeable for calcium and zinc ions. Plays an essential role for the depolarizing photoresponse of retinal ON bipolar cells. In the dark, tonic release of glutamate activates the G-protein coupled receptor for glutamate (GRM6), its activation induces the release of G(o) and the beta-gamma G protein dimer. Both subunits can interact and inactivate the TRPM1 channel. A light onset, induces decrease in glutamate release and deactivation of GRM6 leading to channel opening and membrane depolarization. May play a role in metastasis suppression. The polypeptide is Transient receptor potential cation channel subfamily M member 1 (Mus musculus (Mouse)).